Reading from the N-terminus, the 333-residue chain is Ornithine carbamoyltransferase (333 aa).

Residues 56-59, Arg107, and 134-137 each bind carbamoyl phosphate; these read STRT and HPTQ. L-ornithine-binding positions include Asn167, Asp231, and 235 to 236; that span reads SM. Carbamoyl phosphate contacts are provided by residues 273–274 and Arg318; that span reads CL.

Belongs to the aspartate/ornithine carbamoyltransferase superfamily. OTCase family.

It localises to the cytoplasm. It carries out the reaction carbamoyl phosphate + L-ornithine = L-citrulline + phosphate + H(+). Its pathway is amino-acid degradation; L-arginine degradation via ADI pathway; carbamoyl phosphate from L-arginine: step 2/2. Reversibly catalyzes the transfer of the carbamoyl group from carbamoyl phosphate (CP) to the N(epsilon) atom of ornithine (ORN) to produce L-citrulline. This Clostridium botulinum (strain Langeland / NCTC 10281 / Type F) protein is Ornithine carbamoyltransferase.